The sequence spans 1209 residues: Pre-mRNA-splicing factor rse1 (1209 aa).

This sequence belongs to the RSE1 family. Associated with the spliceosome.

It is found in the nucleus. In terms of biological role, involved in pre-mRNA splicing and cell cycle control. In Neurospora crassa (strain ATCC 24698 / 74-OR23-1A / CBS 708.71 / DSM 1257 / FGSC 987), this protein is Pre-mRNA-splicing factor rse1 (msp-5).